A 277-amino-acid chain; its full sequence is Undecaprenyl-diphosphatase (277 aa).

The next 7 membrane-spanning stretches (helical) occupy residues 3-23, 44-64, 82-102, 109-129, 188-208, 218-238, and 249-269; these read IALL…EFLP, AKVF…LVYW, QFAL…LLFG, LFTP…ILWA, ATDF…VYSL, ADVP…WLCI, and SFIP…ATAW.

Belongs to the UppP family.

The protein localises to the cell inner membrane. It catalyses the reaction di-trans,octa-cis-undecaprenyl diphosphate + H2O = di-trans,octa-cis-undecaprenyl phosphate + phosphate + H(+). Its function is as follows. Catalyzes the dephosphorylation of undecaprenyl diphosphate (UPP). Confers resistance to bacitracin. The protein is Undecaprenyl-diphosphatase of Polaromonas sp. (strain JS666 / ATCC BAA-500).